Consider the following 200-residue polypeptide: Inducible T-cell costimulator (200 aa).

Residues 1–20 (MKPYFCRVFVFCFLIRLLTG) form the signal peptide. The Extracellular segment spans residues 21-144 (EINGSADHRM…QLCCQLKLWL (124 aa)). Residue N23 is glycosylated (N-linked (GlcNAc...) asparagine). The region spanning 30–133 (MFSFHNGGVQ…LSGGYLHIYE (104 aa)) is the Ig-like V-type domain. Cystine bridges form between C42/C109 and C63/C83. N89 and N123 each carry an N-linked (GlcNAc...) asparagine glycan. A helical transmembrane segment spans residues 145 to 165 (PVGCAAFVVVLLFGCILIIWF). At 166-200 (SKKKYGSSVHDPNSEYMFMAAVNTNKKSRLAGVTS) the chain is on the cytoplasmic side.

As to quaternary structure, homodimer; disulfide-linked. Interacts with ICOSLG. Interacts with PIK3R1. Interacts with TBK1; this interaction is critical for the maturation of T follicular regulatory cells. In terms of processing, N-glycosylated. In terms of tissue distribution, expressed on activated T-cells and resting memory T-cells. High expression seen in the thymic medulla and in the germinal centers and T-cell zones of lymph nodes and Peyer patches. Expressed at low levels in the spleen.

The protein localises to the cell membrane. Stimulatory receptor expressed in activated or antigen-experienced T-cells that plays an important role in the immune response. Upon binding to its ligand ICOSL expressed on antigen presenting cells (APCs), delivers costimulatory signals that enhances all basic T-cell responses to a foreign antigen, namely proliferation, secretion of lymphokines including IL10, up-regulation of molecules that mediate cell-cell interaction, and effective help for antibody secretion by B-cells. Also acts as a costimulatory receptor critical for the differentiation of T follicular regulatory cells upon immune challenges such as viral infection. Mechanistically, potentiates TCR-induced calcium flux by augmenting PLCG1 activation and actin remodeling. In addition, activates PI3K signaling pathways independently of calcium flux. Essential both for efficient interaction between T and B-cells and for normal antibody responses to T-cell dependent antigens. Prevents the apoptosis of pre-activated T-cells. Plays a critical role in CD40-mediated class switching of immunoglobin isotypes. This Mus musculus (Mouse) protein is Inducible T-cell costimulator (Icos).